Reading from the N-terminus, the 343-residue chain is General transcription and DNA repair factor IIH subunit TFB6 (343 aa).

Tyr-69 carries the post-translational modification Phosphotyrosine. Residues Thr-71 and Thr-84 each carry the phosphothreonine modification. 4 positions are modified to phosphoserine: Ser-104, Ser-105, Ser-108, and Ser-342.

In terms of assembly, component of the general transcription factor TFIIH, composed of a 7-subunit TFIIH core complex composed of XPB/SSL2, XPD/RAD3, SSL1, TFB1, TFB2, TFB4 and TFB5 which is active in NER; the 3-subunit CTD-kinase module TFIIK composed of CCL1, KIN28, and TFB3 which is active in transcription; as well as TFB6 that regulates SSL2 association with the complex. Post-translationally, phosphorylation leads the dissociation of from SSL2.

The protein localises to the cytoplasm. The protein resides in the nucleus. In terms of biological role, component of the general transcription and DNA repair factor IIH (TFIIH) core complex, which is involved in general and transcription-coupled nucleotide excision repair (NER) of damaged DNA and, when complexed to TFIIK, in RNA transcription by RNA polymerase II. In NER, TFIIH acts by opening DNA around the lesion to allow the excision of the damaged oligonucleotide and its replacement by a new DNA fragment. In transcription, TFIIH has an essential role in transcription initiation. When the pre-initiation complex (PIC) has been established, TFIIH is required for promoter opening and promoter escape. Phosphorylation of the C-terminal tail (CTD) of the largest subunit of RNA polymerase II by the kinase module TFIIK controls the initiation of transcription. TFB6 facilitates dissociation of the SSL2 helicase from TFIIH after transcription initiation. This is General transcription and DNA repair factor IIH subunit TFB6 from Saccharomyces cerevisiae (strain ATCC 204508 / S288c) (Baker's yeast).